The chain runs to 465 residues: 2-methylcitrate synthase, mitochondrial (465 aa).

2 residues coordinate CoA: arginine 72 and lysine 190. Histidine 265 is a binding site for oxaloacetate. Leucine 300 is a CoA binding site. Histidine 301 is an active-site residue. Residues valine 342, glycine 344, and tyrosine 345 each contribute to the CoA site. Residues histidine 347 and arginine 356 each coordinate oxaloacetate. Histidine 347 is a catalytic residue. 3 residues coordinate CoA: threonine 394, lysine 395, and asparagine 400. The active site involves aspartate 402. Oxaloacetate contacts are provided by arginine 428 and arginine 448.

The protein belongs to the citrate synthase family. In terms of assembly, homodimer.

Its subcellular location is the mitochondrion matrix. It carries out the reaction propanoyl-CoA + oxaloacetate + H2O = (2S,3S)-2-methylcitrate + CoA + H(+). The catalysed reaction is oxaloacetate + acetyl-CoA + H2O = citrate + CoA + H(+). Its pathway is organic acid metabolism; propanoate degradation. With respect to regulation, activity is inhibited by p-chloromercuribenzoate (pCMB), monoiodoacetamide, H(2)O(2), ATP, ADP, NADH, NADPH, Hg(2+) and Zn(2+). Its function is as follows. Component of the methylcitrate cycle that catalyzes the synthesis of (2S,3S)-2-methylcitrate from propionyl-CoA and oxaloacetate. Plays an important role in detoxification of propionyl-CoA, an inhibitor of both primary and secondary metabolism. Also has citrate synthase activity using as substrates acetyl-CoA and oxaloacetate. This chain is 2-methylcitrate synthase, mitochondrial, found in Yarrowia lipolytica (strain CLIB 122 / E 150) (Yeast).